A 301-amino-acid polypeptide reads, in one-letter code: ADP,ATP carrier protein 1 (301 aa).

Solcar repeat units lie at residues 8–100 (YGFA…YKQV), 113–203 (RYFL…AKGM), and 210–299 (TSIF…VKAL). 5 helical membrane-spanning segments follow: residues 10-39 (FAKDFLAGGISAAVSKTAVAPIERVKLLLQ), 77-101 (LANVIRYFPTQALNFAFKDVYKQVF), 112-132 (WRYFLGNLGSGGAAGATSLCF), 181-201 (VSVQGIIIYRAAYFGCFDTAK), and 213-233 (FVSWAIAQVVTTASGIISYPF). Arg82 and Lys94 together coordinate ADP. ADP is bound at residue Arg237. The tract at residues 237-242 (RRRMMM) is important for transport activity. The Nucleotide carrier signature motif signature appears at 237-242 (RRRMMM). Residues 276–293 (AFSNVLRGTGGALVLVFY) traverse the membrane as a helical segment.

This sequence belongs to the mitochondrial carrier (TC 2.A.29) family. As to quaternary structure, monomer.

The protein resides in the mitochondrion inner membrane. It carries out the reaction ADP(in) + ATP(out) = ADP(out) + ATP(in). With respect to regulation, the matrix-open state (m-state) is inhibited by the membrane-permeable bongkrekic acid (BKA). The cytoplasmic-open state (c-state) is inhibited by the membrane-impermeable toxic inhibitor carboxyatractyloside (CATR). Its function is as follows. ADP:ATP antiporter that mediates import of ADP into the mitochondrial matrix for ATP synthesis, and export of ATP out to fuel the cell. Cycles between the cytoplasmic-open state (c-state) and the matrix-open state (m-state): operates by the alternating access mechanism with a single substrate-binding site intermittently exposed to either the cytosolic (c-state) or matrix (m-state) side of the inner mitochondrial membrane. The chain is ADP,ATP carrier protein 1 from Anopheles gambiae (African malaria mosquito).